The chain runs to 943 residues: MLKLLLGDPNTRKLKRYQPMVEEINLLEEDVSILTDDELRNETHNLKSNISSELNIKKQKELLEETLPKAFAIVREASKRVLEMRHFDVQLIGGMVLHEGQIAEMKTGEGKTLVATLPCYLNALTGKGVHVVTVNDYLARRDAEWMGQVHRFLGLSVGLIQQDMSPAERKKNYACDITYATNSELGFDYLRDNMATEIEEVVQRKFNYCVIDEVDSILIDEARTPLIISGQIERPQEKYQKAAELSLSLIKAKELSKDGIDPEGDYEVDEKQRSCILTDQGFAKCEEALKVNDLYDPKDPWAHYITNALKAKELFVKDVNYIIKKDEAVIVDEFTGRVMPGRRWSDGQHQAIEAKEGLKIQPETQTLASITYQNFFLLYPGLAGMTGTAKTEEVEFEKTYKLESTVVPTNQIRKRQDWADQVFKTELGKWKAVANETAEIHRNGRPVLVGTTSVEKSELLSSLLFEQQIPHNLLNAKPENVEREAEIVAQAGRSGAVTIATNMAGRGTDIILGGNSDYMARLKLKETLMPLLVKPDNEHKPPIPQQRNSKSGGGFSANVDSIANKNTKSGVDSLFPCQLGEDIKRKLSLLSNELVKNWGDRSLTILELDDKIATAAEKAPTEDKLIQSLRESLSEVKNEYEKVLIHEEENVRNAGGLHVIGTERHESRRVDNQLRGRAGRQGDLGSTRFFLSLEDNLLRIFGGDRVANLMNAFRVDEDMPIESGMLTRSLESAQKKVETYYYDIRKQVFEYDEVMNNQRKAVYNERLRVLKGNDLKKQVIGYGERTMEEIVEAYINPDLPPEEWDIDQLISKVKEFIYLLNDLKSEDVSVLSIEELKNYLQEQLRIAYDLKEAQIEKFRPGLMREAERFFILQQIDNLWREHLQSMDSLRESVGLRGYGQKDPLIEYKNEGYDMFLEMMTNMRRNVIYSMFMFQPKSEKVTNN.

ATP-binding positions include glutamine 90, 108 to 112 (GEGKT), and aspartate 509. The interval 534 to 561 (KPDNEHKPPIPQQRNSKSGGGFSANVDS) is disordered.

Belongs to the SecA family. In terms of assembly, monomer and homodimer. Part of the essential Sec protein translocation apparatus which comprises SecA, SecYEG and auxiliary proteins SecDF. Other proteins may also be involved.

Its subcellular location is the cell inner membrane. It is found in the cellular thylakoid membrane. The protein localises to the cytoplasm. The catalysed reaction is ATP + H2O + cellular proteinSide 1 = ADP + phosphate + cellular proteinSide 2.. In terms of biological role, part of the Sec protein translocase complex. Interacts with the SecYEG preprotein conducting channel. Has a central role in coupling the hydrolysis of ATP to the transfer of proteins into and across the cell membrane, serving as an ATP-driven molecular motor driving the stepwise translocation of polypeptide chains across the membrane. Probably participates in protein translocation into and across both the cytoplasmic and thylakoid membranes in cyanobacterial cells. This is Protein translocase subunit SecA from Prochlorococcus marinus subsp. pastoris (strain CCMP1986 / NIES-2087 / MED4).